Reading from the N-terminus, the 424-residue chain is Na(+)/H(+) antiporter NhaA (424 aa).

11 consecutive transmembrane segments (helical) span residues 23–43, 65–85, 102–122, 131–151, 160–180, 183–203, 211–231, 265–285, 303–323, 341–361, and 373–393; these read ILLIFAAILAMIVANSPLATL, VHLWINDGLMAVFFLLVGLEI, LPFIAAAAGMAVPAALYMFFV, GWAIPAATDIAFAMGVLALLG, LFLVTVAIVDDMGAVAIIALF, AKINLLALGAAAAILGIMFAC, LLVYMALFLLLWYAMLLSGVH, ALHPTVAFAIVPLFGFANAGV, IAAGLFLGKQIGIFGSVWLAV, AVSMLCGIGFTMSLFIGSLAF, and IGILMGSLASALVGFAVLRLA.

It belongs to the NhaA Na(+)/H(+) (TC 2.A.33) antiporter family.

Its subcellular location is the cell inner membrane. The enzyme catalyses Na(+)(in) + 2 H(+)(out) = Na(+)(out) + 2 H(+)(in). Na(+)/H(+) antiporter that extrudes sodium in exchange for external protons. In Sphingopyxis alaskensis (strain DSM 13593 / LMG 18877 / RB2256) (Sphingomonas alaskensis), this protein is Na(+)/H(+) antiporter NhaA.